The primary structure comprises 95 residues: Protein TusB (95 aa).

This sequence belongs to the DsrH/TusB family. As to quaternary structure, heterohexamer, formed by a dimer of trimers. The hexameric TusBCD complex contains 2 copies each of TusB, TusC and TusD. The TusBCD complex interacts with TusE.

Its subcellular location is the cytoplasm. Part of a sulfur-relay system required for 2-thiolation of 5-methylaminomethyl-2-thiouridine (mnm(5)s(2)U) at tRNA wobble positions. In Escherichia coli (strain ATCC 8739 / DSM 1576 / NBRC 3972 / NCIMB 8545 / WDCM 00012 / Crooks), this protein is Protein TusB.